The chain runs to 84 residues: Small ribosomal subunit protein bS20 (84 aa).

It belongs to the bacterial ribosomal protein bS20 family.

In terms of biological role, binds directly to 16S ribosomal RNA. In Ligilactobacillus salivarius (strain UCC118) (Lactobacillus salivarius), this protein is Small ribosomal subunit protein bS20.